The following is a 209-amino-acid chain: Na(+)-translocating NADH-quinone reductase subunit D (209 aa).

5 helical membrane passes run 42–62 (LVMTIAVTLVTAFSSFFISLI), 72–92 (IIVQMAIIASLVIVVDQILQA), 103–123 (VFVGLIITNCIVMGRAEAYAM), 131–151 (FMDGIGNGLGYGVILVLVGFL), and 178–198 (NGLFLLAPSAFFIIGMLIWGL).

The protein belongs to the NqrDE/RnfAE family. Composed of six subunits; NqrA, NqrB, NqrC, NqrD, NqrE and NqrF.

The protein localises to the cell inner membrane. It catalyses the reaction a ubiquinone + n Na(+)(in) + NADH + H(+) = a ubiquinol + n Na(+)(out) + NAD(+). Its function is as follows. NQR complex catalyzes the reduction of ubiquinone-1 to ubiquinol by two successive reactions, coupled with the transport of Na(+) ions from the cytoplasm to the periplasm. NqrA to NqrE are probably involved in the second step, the conversion of ubisemiquinone to ubiquinol. This Photorhabdus laumondii subsp. laumondii (strain DSM 15139 / CIP 105565 / TT01) (Photorhabdus luminescens subsp. laumondii) protein is Na(+)-translocating NADH-quinone reductase subunit D.